A 323-amino-acid polypeptide reads, in one-letter code: Caspase-1 (323 aa).

A propeptide spanning residues 1–33 (MTDECVTRNYGVGIRSPNGSENRGSFIMADNTD) is cleaved from the precursor. Residues His-154 and Cys-196 contribute to the active site. Residues 203–215 (GGITLEKGVTETD) constitute a propeptide that is removed on maturation.

Belongs to the peptidase C14A family. In terms of assembly, heterotetramer that consists of two anti-parallel arranged heterodimers, each one formed by a 22 kDa (p22) and a 13 kDa (p13) subunit.

Involved in the activation cascade of caspases responsible for apoptosis execution. Proteolytically cleaves poly(ADP-ribose) polymerase (PARP). Loss of zygotic DCP-1 function causes larval lethality and melanotic tumors. The polypeptide is Caspase-1 (Dcp-1) (Drosophila melanogaster (Fruit fly)).